Here is a 318-residue protein sequence, read N- to C-terminus: L-carnitine dehydrogenase (318 aa).

14-19 (GSGVIG) lines the NAD(+) pocket.

This sequence belongs to the 3-hydroxyacyl-CoA dehydrogenase family. L-carnitine dehydrogenase subfamily. As to quaternary structure, homodimer.

It localises to the cytoplasm. It catalyses the reaction carnitine + NAD(+) = 3-dehydrocarnitine + NADH + H(+). It functions in the pathway amine and polyamine metabolism; carnitine metabolism. Functionally, catalyzes the NAD(+)-dependent oxidation of L-carnitine to 3-dehydrocarnitine. In Pseudomonas syringae pv. syringae (strain B728a), this protein is L-carnitine dehydrogenase.